Here is a 68-residue protein sequence, read N- to C-terminus: Conotoxin reg3.14 (68 aa).

An N-terminal signal peptide occupies residues 1 to 22; it reads MMSKLGVLLTICLLLFPLSVLP. The propeptide occupies 23–52; that stretch reads LDGDQPADQPAERMQDISAEQNPWFDPVKR. Disulfide bonds link Cys53–Cys68, Cys54–Cys64, and Cys59–Cys67.

This sequence belongs to the conotoxin M superfamily. Expressed by the venom duct.

It localises to the secreted. The protein is Conotoxin reg3.14 of Conus regius (Crown cone).